The chain runs to 898 residues: Serine/threonine-protein kinase TAO3 (898 aa).

The Protein kinase domain occupies 24–277; the sequence is FIDLHEIGHG…AAELLRHDFI (254 aa). ATP contacts are provided by residues 30 to 38 and Lys53; that span reads IGHGSFGAV. Asp147 serves as the catalytic Proton acceptor. Disordered regions lie at residues 316–372 and 405–424; these read TRNG…EVMD and DEAG…SVQS. Residues Ser324, Ser331, Ser343, Ser346, and Ser349 each carry the phosphoserine modification. The span at 349–366 shows a compositional bias: low complexity; it reads SIPSVSVSTGSRSSSVNS. Position 357 is a phosphothreonine (Thr357). Ser359 bears the Phosphoserine mark. Positions 405 to 416 are enriched in basic and acidic residues; the sequence is DEAGHGDPRPEP. Ser442 carries the post-translational modification Phosphoserine. Coiled-coil stretches lie at residues 452–502, 548–649, and 753–871; these read EQEN…THAN, FLES…HAML, and ILKT…QERE. The tract at residues 565-596 is disordered; it reads EEMNEDHSTPKKEKQERISKHKENLQHTQAEE. Lys830 carries the post-translational modification N6-acetyllysine.

This sequence belongs to the protein kinase superfamily. STE Ser/Thr protein kinase family. STE20 subfamily. As to quaternary structure, self-associates. Interacts with ERN1 and TRAF2. Interaction with TRAF2 is facilitated under ER stress conditions, such as treatment with tunicamycin, and may promote TRAF2 phosphorylation. Interacts (via N-terminus) with STK25; the interaction promotes STK25 abundance at the level of protein expression and/or stability. Post-translationally, autophosphorylated. Phosphorylation at Ser-324 by ATM following DNA damage is required for activation of the p38/MAPK14 stress-activated MAPK cascade. Phosphorylated at Ser-324 and on Tyr residues during T cell activation. Phosphorylated by LRRK2. As to expression, ubiquitously expressed, with a higher expression in the retina.

Its subcellular location is the cytoplasm. The protein resides in the cell membrane. It is found in the membrane raft. It localises to the lipid droplet. It catalyses the reaction L-seryl-[protein] + ATP = O-phospho-L-seryl-[protein] + ADP + H(+). It carries out the reaction L-threonyl-[protein] + ATP = O-phospho-L-threonyl-[protein] + ADP + H(+). Serine/threonine-protein kinase that acts as a regulator of the p38/MAPK14 stress-activated MAPK cascade and of the MAPK8/JNK cascade. In response to DNA damage, involved in the G2/M transition DNA damage checkpoint by activating the p38/MAPK14 stress-activated MAPK cascade, probably by mediating phosphorylation of upstream MAP2K3 and MAP2K6 kinases. Inhibits basal activity of the MAPK8/JNK cascade and diminishes its activation in response to epidermal growth factor (EGF). Positively regulates canonical T cell receptor (TCR) signaling by preventing early PTPN6/SHP1-mediated inactivation of LCK, ensuring sustained TCR signaling that is required for optimal activation and differentiation of T cells. Phosphorylates PTPN6/SHP1 on 'Thr-396', leading to its polyubiquitination and subsequent proteasomal degradation. Required for cell surface expression of metalloprotease ADAM10 on type 1 transitional B cells which is necessary for their NOTCH-mediated development into marginal zone B cells. Also required for the NOTCH-mediated terminal differentiation of splenic conventional type 2 dendritic cells. Positively regulates osteoblast differentiation by acting as an upstream activator of the JNK pathway. Promotes JNK signaling in hepatocytes and positively regulates hepatocyte lipid storage by inhibiting beta-oxidation and triacylglycerol secretion while enhancing lipid synthesis. Restricts age-associated inflammation by negatively regulating differentiation of macrophages and their production of pro-inflammatory cytokines. Plays a role in negatively regulating the abundance of regulatory T cells in white adipose tissue. The chain is Serine/threonine-protein kinase TAO3 (Taok3) from Rattus norvegicus (Rat).